The primary structure comprises 662 residues: Retaining alpha-galactosidase (662 aa).

A signal peptide spans 1–19; that stretch reads MKKLTFLLLCVLCTLSLQA. Glu174 lines the Ca(2+) pocket. Asp415 serves as the catalytic Nucleophile. Residues Glu464 and Glu470 each contribute to the Ca(2+) site. Glu470 (proton donor/acceptor) is an active-site residue.

Belongs to the glycosyl hydrolase 97 family. Monomer. Ca(2+) serves as cofactor.

The enzyme catalyses Hydrolysis of terminal, non-reducing alpha-D-galactose residues in alpha-D-galactosides, including galactose oligosaccharides, galactomannans and galactolipids.. Inhibited by EDTA in vitro. In terms of biological role, galactosidase that is able to hydrolyze the alpha-1,6 disaccharide melibiose and the synthetic p-nitrophenyl alpha-galactoside substrate (pNP-Gal), with retention of the anomeric configuration. Does not hydrolyze DNP-Glc or pNP-Glc. In Bacteroides thetaiotaomicron (strain ATCC 29148 / DSM 2079 / JCM 5827 / CCUG 10774 / NCTC 10582 / VPI-5482 / E50), this protein is Retaining alpha-galactosidase.